A 284-amino-acid polypeptide reads, in one-letter code: Four and a half LIM domains protein 5 (284 aa).

The C4-type zinc finger occupies Cys-8–Cys-32. LIM zinc-binding domains are found at residues Asn-39 to Ser-100, Lys-101 to Ala-160, His-161 to Lys-220, and Ala-223 to Asp-283.

In terms of assembly, interacts with CREM (via the third LIM domain). Interacts (via second LIM domain) with SPAG8.

The protein localises to the nucleus. May be involved in the regulation of spermatogenesis. Stimulates CREM transcriptional activity in a phosphorylation-independent manner. This is Four and a half LIM domains protein 5 (FHL5) from Bos taurus (Bovine).